A 625-amino-acid chain; its full sequence is Mitochondrial Rho GTPase 1 (625 aa).

The Cytoplasmic portion of the chain corresponds to 1–601 (MSDDETLADV…LRRVFYLNDS (601 aa)). In terms of domain architecture, Miro 1 spans 3 to 170 (DDETLADVRI…EIFYYAQKAV (168 aa)). GTP contacts are provided by residues 16–23 (GDEGCGKT), 62–66 (DLSIK), and 123–126 (NKSD). 2 consecutive EF-hand domains span residues 188-223 (RARK…CFGI) and 308-343 (EGVQ…CPVP). Residues Asp201, Asp203, Asp205, Tyr207, Glu212, Asp321, Asp323, Asp325, Cys327, and Glu332 each contribute to the Ca(2+) site. Residues 420–625 (HGTDRKVFQC…LAGFLVLKNL (206 aa)) enclose the Miro 2 domain. GTP contacts are provided by residues 433 to 440 (GAKDAGKT), 470 to 474 (RVKEE), and 537 to 540 (TKVE). The helical; Anchor for type IV membrane protein transmembrane segment at 602–622 (NLLSKITFGAAIVALAGFLVL) threads the bilayer. Residues 623–625 (KNL) lie on the Mitochondrial intermembrane side of the membrane.

The protein belongs to the mitochondrial Rho GTPase family.

The protein resides in the mitochondrion outer membrane. In terms of biological role, mitochondrial GTPase involved in mitochondrial trafficking. Probably involved in control of anterograde transport of mitochondria and their subcellular distribution. Plays a role in maintaining mitochondrial morphology. The sequence is that of Mitochondrial Rho GTPase 1 from Caenorhabditis elegans.